The primary structure comprises 456 residues: Adenylosuccinate synthetase (456 aa).

Residues G11–G17 and G39–T41 contribute to the GTP site. The active-site Proton acceptor is D12. Mg(2+) contacts are provided by D12 and G39. Residues D12–K15, N37–H40, T127, R141, Q232, T247, and R328 contribute to the IMP site. The Proton donor role is filled by H40. T324–R330 serves as a coordination point for substrate. GTP contacts are provided by residues R330, H356 to D358, and G441 to G443.

It belongs to the adenylosuccinate synthetase family. As to quaternary structure, homodimer. Mg(2+) is required as a cofactor.

It is found in the cytoplasm. The enzyme catalyses IMP + L-aspartate + GTP = N(6)-(1,2-dicarboxyethyl)-AMP + GDP + phosphate + 2 H(+). It participates in purine metabolism; AMP biosynthesis via de novo pathway; AMP from IMP: step 1/2. Plays an important role in the de novo pathway of purine nucleotide biosynthesis. Catalyzes the first committed step in the biosynthesis of AMP from IMP. This Natronomonas pharaonis (strain ATCC 35678 / DSM 2160 / CIP 103997 / JCM 8858 / NBRC 14720 / NCIMB 2260 / Gabara) (Halobacterium pharaonis) protein is Adenylosuccinate synthetase.